The primary structure comprises 206 residues: MASRRRTLLKVIILGDSGVGKTSLMNQYVNKKFSNQYKATIGADFLTKEVQFEDRLFTLQIWDTAGQERFQSLGVAFYRGADCCVLVYDVNSMKSFDNLNNWREEFLIQASPSDPDNFPFVLLGNKVDVDGGNSRVVSEKKAKAWCASKGNIPYFETSAKEGTNVEDAFQCIVKNALKNEPEEELYVPDTVDVVGGNRAQRSSGCC.

Residues 15–22 (GDSGVGKT), 63–67 (DTAGQ), and 125–128 (NKVD) contribute to the GTP site. Residues Cys205 and Cys206 are each lipidated (S-geranylgeranyl cysteine).

Belongs to the small GTPase superfamily. Rab family.

It localises to the cell membrane. Functionally, protein transport. Probably involved in vesicular traffic. This Cenchrus ciliaris (Buffelgrass) protein is Ras-related protein Rab7.